A 241-amino-acid polypeptide reads, in one-letter code: Sugar fermentation stimulation protein homolog (241 aa).

This sequence belongs to the SfsA family.

The sequence is that of Sugar fermentation stimulation protein homolog from Jannaschia sp. (strain CCS1).